Consider the following 397-residue polypeptide: Elongation factor Tu (397 aa).

One can recognise a tr-type G domain in the interval K10–V207. The G1 stretch occupies residues G19–T26. G19–T26 is a binding site for GTP. Residue T26 participates in Mg(2+) binding. The G2 stretch occupies residues G63–N67. A G3 region spans residues D84–G87. Residues D84–H88 and N139–D142 contribute to the GTP site. A G4 region spans residues N139–D142. A G5 region spans residues S177–L179.

It belongs to the TRAFAC class translation factor GTPase superfamily. Classic translation factor GTPase family. EF-Tu/EF-1A subfamily. As to quaternary structure, monomer.

It is found in the cytoplasm. It catalyses the reaction GTP + H2O = GDP + phosphate + H(+). Functionally, GTP hydrolase that promotes the GTP-dependent binding of aminoacyl-tRNA to the A-site of ribosomes during protein biosynthesis. The sequence is that of Elongation factor Tu from Tropheryma whipplei (strain Twist) (Whipple's bacillus).